The primary structure comprises 215 residues: Pyridoxine/pyridoxamine 5'-phosphate oxidase (215 aa).

Substrate contacts are provided by residues 9 to 12 and lysine 67; that span reads RKEY. Residues 62-67, 77-78, lysine 84, and glutamine 106 each bind FMN; these read RIVLLK and YT. Tyrosine 124, arginine 128, and serine 132 together coordinate substrate. FMN-binding positions include 141 to 142 and tryptophan 187; that span reads QS. 193–195 is a substrate binding site; sequence RLH. Arginine 197 contributes to the FMN binding site.

This sequence belongs to the pyridoxamine 5'-phosphate oxidase family. Homodimer. The cofactor is FMN.

It catalyses the reaction pyridoxamine 5'-phosphate + O2 + H2O = pyridoxal 5'-phosphate + H2O2 + NH4(+). The enzyme catalyses pyridoxine 5'-phosphate + O2 = pyridoxal 5'-phosphate + H2O2. The protein operates within cofactor metabolism; pyridoxal 5'-phosphate salvage; pyridoxal 5'-phosphate from pyridoxamine 5'-phosphate: step 1/1. Its pathway is cofactor metabolism; pyridoxal 5'-phosphate salvage; pyridoxal 5'-phosphate from pyridoxine 5'-phosphate: step 1/1. In terms of biological role, catalyzes the oxidation of either pyridoxine 5'-phosphate (PNP) or pyridoxamine 5'-phosphate (PMP) into pyridoxal 5'-phosphate (PLP). The polypeptide is Pyridoxine/pyridoxamine 5'-phosphate oxidase (Cytophaga hutchinsonii (strain ATCC 33406 / DSM 1761 / CIP 103989 / NBRC 15051 / NCIMB 9469 / D465)).